Here is a 100-residue protein sequence, read N- to C-terminus: Putative protein adenylyltransferase MJ0604 (100 aa).

Residues 29 to 43 (GSYARGDYTEESDID) carry the GSX(10)DXD motif motif. Residues Asp-41 and Asp-43 each contribute to the Mg(2+) site.

It belongs to the MntA antitoxin family. The cofactor is Mg(2+).

It carries out the reaction L-tyrosyl-[protein] + ATP = O-(5'-adenylyl)-L-tyrosyl-[protein] + diphosphate. The enzyme catalyses O-(5'-adenylyl)-L-tyrosyl-[protein] + ATP = O-[5'-(adenylyl-(5'-&gt;3')-adenylyl)]-L-tyrosyl-[protein] + diphosphate. In terms of biological role, putative antitoxin component of a putative type VII toxin-antitoxin (TA) system. Its cognate toxin might be MJ0605, which it might AMPylate. The chain is Putative protein adenylyltransferase MJ0604 from Methanocaldococcus jannaschii (strain ATCC 43067 / DSM 2661 / JAL-1 / JCM 10045 / NBRC 100440) (Methanococcus jannaschii).